The sequence spans 721 residues: Exocyst complex component 3-like protein 4 (721 aa).

2 disordered regions span residues 1–52 (MPLP…SLGM) and 94–135 (GLTA…QAES). The span at 22–37 (SQTLPVTTWKSNSMKE) shows a compositional bias: polar residues. At Ser515 the chain carries Phosphoserine.

Belongs to the SEC6 family.

The chain is Exocyst complex component 3-like protein 4 (Exoc3l4) from Mus musculus (Mouse).